The chain runs to 265 residues: uncharacterized protein (265 aa).

Residues 3–23 (KKTWVYIIIAIIIILLLVWYF) traverse the membrane as a helical; Signal-anchor for type II membrane protein segment. 2 N-linked (GlcNAc...) asparagine; by host glycosylation sites follow: Asn37 and Asn125. Residues 37–94 (NQTYNMLQQQISSLNQQILFLKQQISNLHVPAPTSTVNSLRQTVSDINQQVSTINNQI) adopt a coiled-coil conformation. Residues 158–257 (NVADNELNVL…KNSLGSAVRN (100 aa)) are a coiled coil.

The protein resides in the host membrane. It is found in the virion. This is an uncharacterized protein from Acanthamoeba polyphaga (Amoeba).